The following is a 467-amino-acid chain: MMKFMTEDFLLSTSTAQKLYHDYAEEQPIFDYHCHLNPKEIAENRQFNDLAEIWLEGDHYKWRAMRSAGVEEHLITGSADKYSKYLAFANTVPKCIGNPIYHWTHLELRRPFGITDTIFSPETAEKIWHKGKELLQQPEFSARGIMKKMNVNLVGTTDDPIDSLEYHKAIAEDNTFDVEVVPSFRPDRAFKIELPLFNDYIEQLGKVADIEINTFDKLKQALSKRIEHFDKYGCKSADHGMEIVRFSPIPDEKTLDQILQKRLNNQPIEEEEIAQFSTALLVWLGTEYHKHHWVMQLHIGAIRNNNTRMFKLLGADAGFDSIGDRAFAESLSRLLDSMDQTDQLPKTILYCLNPRDNEMLGTMIGNFQTGGIAGKIQFGSGWWFNDQKDGMERQLQQLSQLGLLSQFVGMLTDSRSFLSYTRHEYFRRILCEMIGGWVERGEAPNDLNLLGKMVKDICYDNAKRYFK.

It belongs to the metallo-dependent hydrolases superfamily. Uronate isomerase family.

The enzyme catalyses D-glucuronate = D-fructuronate. It catalyses the reaction aldehydo-D-galacturonate = keto-D-tagaturonate. It participates in carbohydrate metabolism; pentose and glucuronate interconversion. This chain is Uronate isomerase, found in Histophilus somni (strain 2336) (Haemophilus somnus).